A 317-amino-acid polypeptide reads, in one-letter code: Beta-ketoacyl-[acyl-carrier-protein] synthase III (317 aa).

Catalysis depends on residues Cys112 and His244. Positions 245 to 249 (QANIR) are ACP-binding. Asn274 is an active-site residue.

The protein belongs to the thiolase-like superfamily. FabH family. In terms of assembly, homodimer.

The protein resides in the cytoplasm. It carries out the reaction malonyl-[ACP] + acetyl-CoA + H(+) = 3-oxobutanoyl-[ACP] + CO2 + CoA. It functions in the pathway lipid metabolism; fatty acid biosynthesis. Functionally, catalyzes the condensation reaction of fatty acid synthesis by the addition to an acyl acceptor of two carbons from malonyl-ACP. Catalyzes the first condensation reaction which initiates fatty acid synthesis and may therefore play a role in governing the total rate of fatty acid production. Possesses both acetoacetyl-ACP synthase and acetyl transacylase activities. Its substrate specificity determines the biosynthesis of branched-chain and/or straight-chain of fatty acids. This is Beta-ketoacyl-[acyl-carrier-protein] synthase III from Rickettsia massiliae (strain Mtu5).